A 415-amino-acid chain; its full sequence is Methylthioribose-1-phosphate isomerase (415 aa).

Asp-284 serves as the catalytic Proton donor.

This sequence belongs to the eIF-2B alpha/beta/delta subunits family. MtnA subfamily.

The protein resides in the cytoplasm. Its subcellular location is the nucleus. The enzyme catalyses 5-(methylsulfanyl)-alpha-D-ribose 1-phosphate = 5-(methylsulfanyl)-D-ribulose 1-phosphate. The protein operates within amino-acid biosynthesis; L-methionine biosynthesis via salvage pathway; L-methionine from S-methyl-5-thio-alpha-D-ribose 1-phosphate: step 1/6. Catalyzes the interconversion of methylthioribose-1-phosphate (MTR-1-P) into methylthioribulose-1-phosphate (MTRu-1-P). This chain is Methylthioribose-1-phosphate isomerase, found in Vanderwaltozyma polyspora (strain ATCC 22028 / DSM 70294 / BCRC 21397 / CBS 2163 / NBRC 10782 / NRRL Y-8283 / UCD 57-17) (Kluyveromyces polysporus).